The following is a 117-amino-acid chain: MDKKAARIRRATRARRKLQELGATRLVVHRTPRHIYAQVIAPNGSEVLVAASTVEKAIAEQLKGTGNKDAAAAVGKTIAVRALEKGIKDVSFDRSGFQYHGRVQALADAAREAGLQF.

It belongs to the universal ribosomal protein uL18 family. Part of the 50S ribosomal subunit; part of the 5S rRNA/L5/L18/L25 subcomplex. Contacts the 5S and 23S rRNAs.

Functionally, this is one of the proteins that bind and probably mediate the attachment of the 5S RNA into the large ribosomal subunit, where it forms part of the central protuberance. The polypeptide is Large ribosomal subunit protein uL18 (Sodalis glossinidius (strain morsitans)).